Here is a 103-residue protein sequence, read N- to C-terminus: Eukaryotic translation initiation factor 4E-1A-binding protein homolog (103 aa).

The disordered stretch occupies residues 49-103; that stretch reads NSPLSKTPPPQLAHITNTELNKKVEKSTTTPTTTTPPTTTAKPKPTNDDDIFPME. A compositionally biased stretch (low complexity) spans 76 to 92; sequence TTTPTTTTPPTTTAKPK.

This sequence belongs to the eIF4E-binding protein family.

In terms of biological role, regulates assembly of the eIF4F complex. The polypeptide is Eukaryotic translation initiation factor 4E-1A-binding protein homolog (febA) (Dictyostelium discoideum (Social amoeba)).